The following is a 135-amino-acid chain: Holo-[acyl-carrier-protein] synthase (135 aa).

Mg(2+)-binding residues include D8 and E58.

Belongs to the P-Pant transferase superfamily. AcpS family. Mg(2+) serves as cofactor.

The protein localises to the cytoplasm. It catalyses the reaction apo-[ACP] + CoA = holo-[ACP] + adenosine 3',5'-bisphosphate + H(+). Transfers the 4'-phosphopantetheine moiety from coenzyme A to a Ser of acyl-carrier-protein. The polypeptide is Holo-[acyl-carrier-protein] synthase (Ligilactobacillus salivarius (strain UCC118) (Lactobacillus salivarius)).